A 77-amino-acid polypeptide reads, in one-letter code: NADH dehydrogenase [ubiquinone] 1 alpha subcomplex subunit 3 (77 aa).

The chain crosses the membrane as a helical span at residues 23–45; sequence IVGGSALALAGIVMATIGVANYY.

Belongs to the complex I NDUFA3 subunit family. As to quaternary structure, complex I is composed of 43 different subunits.

Its subcellular location is the mitochondrion inner membrane. The protein resides in the cytoplasm. It is found in the myofibril. The protein localises to the sarcomere. It localises to the z line. In terms of biological role, accessory subunit of the mitochondrial membrane respiratory chain NADH dehydrogenase (Complex I), that is believed not to be involved in catalysis. Complex I functions in the transfer of electrons from NADH to the respiratory chain. The immediate electron acceptor for the enzyme is believed to be ubiquinone. Required for the maintenance of muscle integrity and for cell proliferation in the wing imaginal disc epithelium, possibly by interacting with the chaperone-assisted selective autophagy (CASA) pathway. The protein is NADH dehydrogenase [ubiquinone] 1 alpha subcomplex subunit 3 of Drosophila melanogaster (Fruit fly).